The primary structure comprises 278 residues: PILR alpha-associated neural protein (278 aa).

The N-terminal stretch at 1-27 is a signal peptide; the sequence is MWSAQLLSQLLPLWPLLLLSVLPPAQG. The segment at 25–93 is disordered; sequence AQGSSHRSPP…PSGFEEGPPS (69 aa). Residues 28 to 174 are Extracellular-facing; that stretch reads SSHRSPPAPA…FGGRGEGVDP (147 aa). The O-linked (GalNAc...) threonine glycan is linked to Thr-136. The helical transmembrane segment at 175 to 195 threads the bilayer; it reads QLYVTITISIIIVLVATGIIF. The Cytoplasmic portion of the chain corresponds to 196–278; sequence KFCWDRSQKR…QLNRIPLVNL (83 aa). Positions 206 to 278 are disordered; that stretch reads RRPSGQQGAL…QLNRIPLVNL (73 aa). Positions 209-225 are enriched in polar residues; it reads SGQQGALRQEESQQPLT.

Post-translationally, O-glycosylation at Thr-136 is essential for recognition by PILRA. In terms of tissue distribution, mainly expressed in brain and spinal cord. Weak expression also detected in heart, kidney, spleen and lymph node. Virtually no expression detected in liver and embryo relative to brain.

Its subcellular location is the membrane. Its function is as follows. Acts as a ligand for PILRA in neuronal tissues, where it may be involved in immune regulation. In Mus musculus (Mouse), this protein is PILR alpha-associated neural protein (Pianp).